Consider the following 152-residue polypeptide: SsrA-binding protein (152 aa).

It belongs to the SmpB family.

Its subcellular location is the cytoplasm. Its function is as follows. Required for rescue of stalled ribosomes mediated by trans-translation. Binds to transfer-messenger RNA (tmRNA), required for stable association of tmRNA with ribosomes. tmRNA and SmpB together mimic tRNA shape, replacing the anticodon stem-loop with SmpB. tmRNA is encoded by the ssrA gene; the 2 termini fold to resemble tRNA(Ala) and it encodes a 'tag peptide', a short internal open reading frame. During trans-translation Ala-aminoacylated tmRNA acts like a tRNA, entering the A-site of stalled ribosomes, displacing the stalled mRNA. The ribosome then switches to translate the ORF on the tmRNA; the nascent peptide is terminated with the 'tag peptide' encoded by the tmRNA and targeted for degradation. The ribosome is freed to recommence translation, which seems to be the essential function of trans-translation. The polypeptide is SsrA-binding protein (Rickettsia akari (strain Hartford)).